A 625-amino-acid chain; its full sequence is Probable potassium transport system protein Kup (625 aa).

A run of 12 helical transmembrane segments spans residues 13–33 (TALA…LYAL), 53–73 (ILSI…VAIV), 103–123 (IYMI…GIIT), 141–161 (VFDP…FLVQ), 172–192 (FGPI…HSVI), 206–226 (AIQF…AVVL), 250–270 (WFFV…ALLL), 282–302 (LLVP…ATVI), 340–360 (IYVP…ILIF), 369–389 (AYGL…AVFI), 400–420 (VLLL…ATSL), and 422–442 (ILSG…ILMT).

It belongs to the HAK/KUP transporter (TC 2.A.72) family.

The protein resides in the cell inner membrane. It catalyses the reaction K(+)(in) + H(+)(in) = K(+)(out) + H(+)(out). Functionally, transport of potassium into the cell. Likely operates as a K(+):H(+) symporter. In Acinetobacter baumannii (strain ACICU), this protein is Probable potassium transport system protein Kup.